A 434-amino-acid polypeptide reads, in one-letter code: Homogentisate 1,2-dioxygenase (434 aa).

Histidine 289 functions as the Proton acceptor in the catalytic mechanism. Residues histidine 332 and glutamate 338 each contribute to the Fe cation site. Residues tyrosine 347 and histidine 368 each coordinate homogentisate. Residue histidine 368 participates in Fe cation binding.

The protein belongs to the homogentisate dioxygenase family. As to quaternary structure, hexamer; dimer of trimers. Fe cation is required as a cofactor.

The enzyme catalyses homogentisate + O2 = 4-maleylacetoacetate + H(+). It functions in the pathway amino-acid degradation; L-phenylalanine degradation; acetoacetate and fumarate from L-phenylalanine: step 4/6. In terms of biological role, involved in the catabolism of homogentisate (2,5-dihydroxyphenylacetate or 2,5-OH-PhAc), a central intermediate in the degradation of phenylalanine and tyrosine. Catalyzes the oxidative ring cleavage of the aromatic ring of homogentisate to yield maleylacetoacetate. This is Homogentisate 1,2-dioxygenase from Pseudomonas fluorescens (strain ATCC BAA-477 / NRRL B-23932 / Pf-5).